Consider the following 591-residue polypeptide: MRSHYCGDINQSHLGQEVTLVGWVNRSRDLGGVVFLDLRDREGLVQVVYDPDLKDVFEMASTLRSEFCVQIKGVVRARPESQINSQMKTGEIEILGKQLTIINASAPLPLSMDNYQNNSEEQRLKYRYLDLRRPEMAERLIFRAKVTSSVRRFLDGNGFLDIETPILTKATPEGARDYLVPSRTYKGQFFALPQSPQLFKQLLMMSGFDRYYQIVKCFRDEDLRADRQPEFTQIDIETSFMSAEQVMEKTEQMMRGLFQDLLNVDLGDFPRMTYAEAMKRYGSDKPDLRNPLELVDIADLVKDVEFAVFNGPANDVEGRVAALRIPTGASLSRKQIDDYTKFAGIYGAKGLAWMKINDLAAGMDGIQSPVLKFLTESIVNDIISRTGAQTGDIILFGADKANVVAEALGALRLKAGEDFKLLEGEWRPMWVVDFPMFEKINGGFHAVHHPFTAPRGISPAELAADPAAAISDAYDMVLNGCELGGGSVRIHNAEMQSTVFSILGIEAEEAQEKFGFLLEALRYGTPPHAGLAFGLDRIIMLMTGASSIRDVMAFPKTTTAACPLTNAPGFANPVQLTELGIAVIEKVKTEE.

Glutamate 173 serves as a coordination point for L-aspartate. The aspartate stretch occupies residues 197-200 (QLFK). Position 219 (arginine 219) interacts with L-aspartate. ATP is bound by residues 219 to 221 (RDE) and glutamine 228. Histidine 448 contacts L-aspartate. Glutamate 482 is a binding site for ATP. Arginine 489 lines the L-aspartate pocket. 534 to 537 (GLDR) contacts ATP.

This sequence belongs to the class-II aminoacyl-tRNA synthetase family. Type 1 subfamily. Homodimer.

The protein localises to the cytoplasm. The catalysed reaction is tRNA(Asp) + L-aspartate + ATP = L-aspartyl-tRNA(Asp) + AMP + diphosphate. Functionally, catalyzes the attachment of L-aspartate to tRNA(Asp) in a two-step reaction: L-aspartate is first activated by ATP to form Asp-AMP and then transferred to the acceptor end of tRNA(Asp). In Shewanella frigidimarina (strain NCIMB 400), this protein is Aspartate--tRNA ligase.